A 100-amino-acid chain; its full sequence is Osteocalcin (100 aa).

A signal peptide spans 1–23 (MRALTLLALLALATLCITGQAGA). Residues 24–51 (KPSGAESSKGAAFVSKQEGSEVVKRPRR) constitute a propeptide that is removed on maturation. In terms of domain architecture, Gla spans 52–98 (YLYQWLGAPAPYPDPLEPKREVCELNPDCDELADHIGFQEAYRRFYG). A 4-hydroxyproline modification is found at P60. Residues E68, E72, E75, and D81 each coordinate Ca(2+). 4-carboxyglutamate occurs at positions 68, 72, and 75. A disulfide bond links C74 and C80.

Belongs to the osteocalcin/matrix Gla protein family. In terms of processing, gamma-carboxyglutamate residues are formed by vitamin K dependent carboxylation by GGCX. These residues are essential for the binding of calcium. Decarboxylation promotes the hormone activity.

It localises to the secreted. Functionally, the carboxylated form is one of the main organic components of the bone matrix, which constitutes 1-2% of the total bone protein: it acts as a negative regulator of bone formation and is required to limit bone formation without impairing bone resorption or mineralization. The carboxylated form binds strongly to apatite and calcium. In terms of biological role, the uncarboxylated form acts as a hormone secreted by osteoblasts, which regulates different cellular processes, such as energy metabolism, male fertility and brain development. Regulates of energy metabolism by acting as a hormone favoring pancreatic beta-cell proliferation, insulin secretion and sensitivity and energy expenditure. Uncarboxylated osteocalcin hormone also promotes testosterone production in the testes: acts as a ligand for G protein-coupled receptor GPRC6A at the surface of Leydig cells, initiating a signaling response that promotes the expression of enzymes required for testosterone synthesis in a CREB-dependent manner. Also acts as a regulator of brain development: osteocalcin hormone crosses the blood-brain barrier and acts as a ligand for GPR158 on neurons, initiating a signaling response that prevents neuronal apoptosis in the hippocampus, favors the synthesis of all monoamine neurotransmitters and inhibits that of gamma-aminobutyric acid (GABA). Osteocalcin also crosses the placenta during pregnancy and maternal osteocalcin is required for fetal brain development. The polypeptide is Osteocalcin (BGLAP) (Macaca mulatta (Rhesus macaque)).